We begin with the raw amino-acid sequence, 626 residues long: Chaperone protein HtpG (626 aa).

The a; substrate-binding stretch occupies residues methionine 1–arginine 339. Residues glutamate 340–lysine 555 are b. Positions leucine 556–glycine 626 are c.

It belongs to the heat shock protein 90 family. As to quaternary structure, homodimer.

The protein resides in the cytoplasm. Its function is as follows. Molecular chaperone. Has ATPase activity. This is Chaperone protein HtpG from Histophilus somni (strain 2336) (Haemophilus somnus).